The following is a 206-amino-acid chain: Large ribosomal subunit protein mL62 (206 aa).

The N-terminal 29 residues, 1-29, are a transit peptide targeting the mitochondrion; that stretch reads MATAWCLPWTLRRAGAWLLTPPLRCPRRA.

The protein belongs to the prokaryotic/mitochondrial release factor family. Mitochondrion-specific ribosomal protein mL62 subfamily. In terms of assembly, component of the mitochondrial 39S ribosomal subunit.

The protein resides in the mitochondrion. The catalysed reaction is an N-acyl-L-alpha-aminoacyl-tRNA + H2O = an N-acyl-L-amino acid + a tRNA + H(+). Essential peptidyl-tRNA hydrolase component of the mitochondrial large ribosomal subunit. Acts as a codon-independent translation release factor that has lost all stop codon specificity and directs the termination of translation in mitochondrion, possibly in case of abortive elongation. May be involved in the hydrolysis of peptidyl-tRNAs that have been prematurely terminated and thus in the recycling of stalled mitochondrial ribosomes. The protein is Large ribosomal subunit protein mL62 of Ailuropoda melanoleuca (Giant panda).